The primary structure comprises 568 residues: Putative ABC transporter ATP-binding protein EF_2153 (568 aa).

ABC transporter domains lie at 6-247 (ITFN…GIRE) and 301-535 (LRLE…ASLK). Residues 40–47 (GPSGSGKS) and 335–342 (GKNGAGKS) each bind ATP.

It belongs to the ABC transporter superfamily.

It is found in the cell membrane. Its function is as follows. Probably part of an ABC transporter complex. Responsible for energy coupling to the transport system. This Enterococcus faecalis (strain ATCC 700802 / V583) protein is Putative ABC transporter ATP-binding protein EF_2153.